A 203-amino-acid chain; its full sequence is MGSSFVIDRSSSSPAPPRGPAPKLSAHARKIICKISPNRSFLFIISLHICEKYFISMGLRGHRSRFSRSVSTFFSPGKLACIAHLRVGCQIVPIFPYGAFLKTPYNRCAGNKVSESTHRRAVVRPSTRYFVTTFQDTETQLIIVSSVEVKKRKGIVILSIEFQSMHLKQRVDHHVVCLKGLVRPGNLVRLQQTSGTFLHFSRP.

Residues 1 to 23 are disordered; sequence MGSSFVIDRSSSSPAPPRGPAPK.

This is an uncharacterized protein from Saccharomyces cerevisiae (strain ATCC 204508 / S288c) (Baker's yeast).